Consider the following 369-residue polypeptide: Phenylalanine--tRNA ligase alpha subunit (369 aa).

Glu269 lines the Mg(2+) pocket.

This sequence belongs to the class-II aminoacyl-tRNA synthetase family. Phe-tRNA synthetase alpha subunit type 1 subfamily. In terms of assembly, tetramer of two alpha and two beta subunits. Mg(2+) is required as a cofactor.

Its subcellular location is the cytoplasm. The catalysed reaction is tRNA(Phe) + L-phenylalanine + ATP = L-phenylalanyl-tRNA(Phe) + AMP + diphosphate + H(+). The protein is Phenylalanine--tRNA ligase alpha subunit of Brucella ovis (strain ATCC 25840 / 63/290 / NCTC 10512).